Consider the following 195-residue polypeptide: Nascent polypeptide-associated complex subunit alpha (195 aa).

Disordered regions lie at residues 1 to 59 (MTGS…SRSE) and 132 to 153 (TREAPQLKTVEEDENEDVEEDS). The span at 7–16 (TRQKEVKEPQ) shows a compositional bias: basic and acidic residues. A compositionally biased stretch (acidic residues) spans 19–33 (VSDDSDNEAVEQELT). The span at 47–59 (DHIDKQAKQSRSE) shows a compositional bias: basic and acidic residues. Residues 56–121 (SRSEKKARKL…AKIEDLTQHA (66 aa)) enclose the NAC-A/B domain. The span at 142–153 (EEDENEDVEEDS) shows a compositional bias: acidic residues.

It belongs to the NAC-alpha family. In terms of assembly, may be part of the nascent polypeptide-associated complex (NAC), which is a heterodimer of icd-2 and icd-1 (via NAC-A/B domains).

Its subcellular location is the cytoplasm. May prevent inappropriate targeting of non-secretory polypeptides to the endoplasmic reticulum (ER). Plays a role in the response to heat stress. This chain is Nascent polypeptide-associated complex subunit alpha, found in Caenorhabditis elegans.